The primary structure comprises 222 residues: ATP synthase F(0) complex subunit a (222 aa).

Transmembrane regions (helical) follow at residues 8–28, 64–84, 93–113, 127–147, 160–180, and 197–219; these read FFYV…ILLP, WSLM…LGLL, QLTV…VPGF, QGTP…SLLI, ITAG…LSSI, and ILEL…LYLH.

The protein belongs to the ATPase A chain family. As to quaternary structure, component of the ATP synthase complex composed at least of ATP5F1A/subunit alpha, ATP5F1B/subunit beta, ATP5MC1/subunit c (homooctomer), MT-ATP6/subunit a, MT-ATP8/subunit 8, ATP5ME/subunit e, ATP5MF/subunit f, ATP5MG/subunit g, ATP5MK/subunit k, ATP5MJ/subunit j, ATP5F1C/subunit gamma, ATP5F1D/subunit delta, ATP5F1E/subunit epsilon, ATP5PF/subunit F6, ATP5PB/subunit b, ATP5PD/subunit d, ATP5PO/subunit OSCP. ATP synthase complex consists of a soluble F(1) head domain (subunits alpha(3) and beta(3)) - the catalytic core - and a membrane F(0) domain - the membrane proton channel (subunits c, a, 8, e, f, g, k and j). These two domains are linked by a central stalk (subunits gamma, delta, and epsilon) rotating inside the F1 region and a stationary peripheral stalk (subunits F6, b, d, and OSCP). Interacts with DNAJC30; interaction is direct.

Its subcellular location is the mitochondrion inner membrane. It carries out the reaction H(+)(in) = H(+)(out). Functionally, subunit a, of the mitochondrial membrane ATP synthase complex (F(1)F(0) ATP synthase or Complex V) that produces ATP from ADP in the presence of a proton gradient across the membrane which is generated by electron transport complexes of the respiratory chain. ATP synthase complex consist of a soluble F(1) head domain - the catalytic core - and a membrane F(1) domain - the membrane proton channel. These two domains are linked by a central stalk rotating inside the F(1) region and a stationary peripheral stalk. During catalysis, ATP synthesis in the catalytic domain of F(1) is coupled via a rotary mechanism of the central stalk subunits to proton translocation. With the subunit c (ATP5MC1), forms the proton-conducting channel in the F(0) domain, that contains two crucial half-channels (inlet and outlet) that facilitate proton movement from the mitochondrial intermembrane space (IMS) into the matrix. Protons are taken up via the inlet half-channel and released through the outlet half-channel, following a Grotthuss mechanism. The protein is ATP synthase F(0) complex subunit a of Loxodonta africana (African elephant).